Reading from the N-terminus, the 197-residue chain is MMSSTTIDVPAESSNVAKGKAVLVAAPRPGGWKKGIAIVDFVLRLGAVAAALGAATTMATADQTLPFFTQFFQFEASYDSFTTFQFFVITMALVGCYLVLSLPLSIVSIIRPHALGPKLFLIILDTVFLTLATASAASAAAVVYVAHNGNQDSNWLAICNQFGDFCAQTSGAVVSSLVAVVVFVLLIVMSALALGKH.

Topologically, residues 1 to 34 are cytoplasmic; sequence MMSSTTIDVPAESSNVAKGKAVLVAAPRPGGWKK. The helical transmembrane segment at 35 to 55 threads the bilayer; the sequence is GIAIVDFVLRLGAVAAALGAA. Topologically, residues 56-85 are extracellular; sequence TTMATADQTLPFFTQFFQFEASYDSFTTFQ. The helical transmembrane segment at 86-106 threads the bilayer; that stretch reads FFVITMALVGCYLVLSLPLSI. Topologically, residues 107-118 are cytoplasmic; that stretch reads VSIIRPHALGPK. Residues 119 to 139 form a helical membrane-spanning segment; it reads LFLIILDTVFLTLATASAASA. Residues 140–171 are Extracellular-facing; that stretch reads AAVVYVAHNGNQDSNWLAICNQFGDFCAQTSG. A helical membrane pass occupies residues 172–192; it reads AVVSSLVAVVVFVLLIVMSAL. Residues 193-197 lie on the Cytoplasmic side of the membrane; that stretch reads ALGKH.

This sequence belongs to the Casparian strip membrane proteins (CASP) family. Homodimer and heterodimers.

The protein resides in the cell membrane. Regulates membrane-cell wall junctions and localized cell wall deposition. Required for establishment of the Casparian strip membrane domain (CSD) and the subsequent formation of Casparian strips, a cell wall modification of the root endodermis that determines an apoplastic barrier between the intraorganismal apoplasm and the extraorganismal apoplasm and prevents lateral diffusion. This chain is Casparian strip membrane protein 4, found in Lotus japonicus (Lotus corniculatus var. japonicus).